The chain runs to 60 residues: Hemocyte defensin Cg-Defh2 (60 aa).

The first 17 residues, 1-17, serve as a signal peptide directing secretion; that stretch reads LLTLAVLLMVSADMAFA. F19, G20, and C21 together coordinate beta-D-GlcNAc-(1-&gt;4)-Mur2Ac(oyl-L-Ala-gamma-D-Glu-L-Lys-D-Ala-D-Ala)-di-trans,octa-cis-undecaprenyl diphosphate. Intrachain disulfides connect C21/C42, C28/C51, C32/C53, and C37/C56. The binds to membrane interface stretch occupies residues 22 to 25; that stretch reads PGDQ. H31 is a binding site for beta-D-GlcNAc-(1-&gt;4)-Mur2Ac(oyl-L-Ala-gamma-D-Glu-L-Lys-D-Ala-D-Ala)-di-trans,octa-cis-undecaprenyl diphosphate. The tract at residues 43-49 is binds to membrane interface; it reads DAVTLWL. Residue C51 coordinates beta-D-GlcNAc-(1-&gt;4)-Mur2Ac(oyl-L-Ala-gamma-D-Glu-L-Lys-D-Ala-D-Ala)-di-trans,octa-cis-undecaprenyl diphosphate.

This sequence belongs to the invertebrate defensin family. As to expression, expressed in hemocytes.

It is found in the secreted. Its subcellular location is the target cell membrane. Functionally, antibacterial peptide mostly active against Gram-positive bacteria. It acts by selectively inhibiting peptidoglycan biosynthesis through complex formation with the cell wall precursor lipid II (1:1 molar ratio) thus inhibiting cell wall synthesis. It does not disrupt cell membranes. Is noticeably more potent than Cg-Defh1. This Magallana gigas (Pacific oyster) protein is Hemocyte defensin Cg-Defh2.